Here is a 157-residue protein sequence, read N- to C-terminus: Transcriptional repressor NrdR (157 aa).

A zinc finger lies at 3 to 34 (CPSCQNTDSRVLESRSADAGKCVRRRRECLNC). Residues 49-139 (VTVIKRSNAK…VYRQFNGIED (91 aa)) form the ATP-cone domain.

It belongs to the NrdR family. It depends on Zn(2+) as a cofactor.

In terms of biological role, negatively regulates transcription of bacterial ribonucleotide reductase nrd genes and operons by binding to NrdR-boxes. This chain is Transcriptional repressor NrdR, found in Prochlorococcus marinus (strain SARG / CCMP1375 / SS120).